A 275-amino-acid polypeptide reads, in one-letter code: Elongation factor Ts (275 aa).

Residues 76 to 79 (TDFV) form an involved in Mg(2+) ion dislocation from EF-Tu region.

It belongs to the EF-Ts family.

It localises to the cytoplasm. Functionally, associates with the EF-Tu.GDP complex and induces the exchange of GDP to GTP. It remains bound to the aminoacyl-tRNA.EF-Tu.GTP complex up to the GTP hydrolysis stage on the ribosome. This chain is Elongation factor Ts, found in Rhodococcus jostii (strain RHA1).